The primary structure comprises 145 residues: Flagellar assembly factor FliW (145 aa).

Belongs to the FliW family. Interacts with translational regulator CsrA and flagellin(s).

The protein resides in the cytoplasm. Its function is as follows. Acts as an anti-CsrA protein, binds CsrA and prevents it from repressing translation of its target genes, one of which is flagellin. Binds to flagellin and participates in the assembly of the flagellum. This Exiguobacterium sp. (strain ATCC BAA-1283 / AT1b) protein is Flagellar assembly factor FliW.